Consider the following 159-residue polypeptide: Cyclic pyranopterin monophosphate synthase (159 aa).

Substrate is bound by residues 75 to 77 (LCH) and 113 to 114 (ME). D128 is an active-site residue.

It belongs to the MoaC family. As to quaternary structure, homohexamer; trimer of dimers.

It catalyses the reaction (8S)-3',8-cyclo-7,8-dihydroguanosine 5'-triphosphate = cyclic pyranopterin phosphate + diphosphate. The protein operates within cofactor biosynthesis; molybdopterin biosynthesis. Its function is as follows. Catalyzes the conversion of (8S)-3',8-cyclo-7,8-dihydroguanosine 5'-triphosphate to cyclic pyranopterin monophosphate (cPMP). The polypeptide is Cyclic pyranopterin monophosphate synthase (Yersinia pseudotuberculosis serotype O:3 (strain YPIII)).